Reading from the N-terminus, the 116-residue chain is Immunoglobulin heavy variable 3-13 (116 aa).

A signal peptide spans 1–19 (MELGLSWVFLVAILEGVQC). The framework-1 stretch occupies residues 20–44 (EVQLVESGGGLVQPGGSLRLSCAAS). In terms of domain architecture, Ig-like spans 20 to 116 (EVQLVESGGG…GDTAVYYCAR (97 aa)). Cys41 and Cys114 are disulfide-bonded. A complementarity-determining-1 region spans residues 45–52 (GFTFSSYD). The tract at residues 53 to 69 (MHWVRQATGKGLEWVSA) is framework-2. The interval 70–76 (IGTAGDP) is complementarity-determining-2. The segment at 77-114 (YYPGSVKGRFTISRENAKNSLYLQMNSLRAGDTAVYYC) is framework-3. The complementarity-determining-3 stretch occupies residues 115–116 (AR).

Immunoglobulins are composed of two identical heavy chains and two identical light chains; disulfide-linked.

Its subcellular location is the secreted. The protein localises to the cell membrane. Its function is as follows. V region of the variable domain of immunoglobulin heavy chains that participates in the antigen recognition. Immunoglobulins, also known as antibodies, are membrane-bound or secreted glycoproteins produced by B lymphocytes. In the recognition phase of humoral immunity, the membrane-bound immunoglobulins serve as receptors which, upon binding of a specific antigen, trigger the clonal expansion and differentiation of B lymphocytes into immunoglobulins-secreting plasma cells. Secreted immunoglobulins mediate the effector phase of humoral immunity, which results in the elimination of bound antigens. The antigen binding site is formed by the variable domain of one heavy chain, together with that of its associated light chain. Thus, each immunoglobulin has two antigen binding sites with remarkable affinity for a particular antigen. The variable domains are assembled by a process called V-(D)-J rearrangement and can then be subjected to somatic hypermutations which, after exposure to antigen and selection, allow affinity maturation for a particular antigen. The polypeptide is Immunoglobulin heavy variable 3-13 (Homo sapiens (Human)).